The sequence spans 206 residues: Putative NAD(P)H nitroreductase MhqN (206 aa).

FMN contacts are provided by residues 11-13, 68-70, 157-158, Arg-193, and Arg-196; these read RRS, QYK, and IG.

The protein belongs to the nitroreductase family. Homodimer. FMN serves as cofactor.

The protein localises to the cytoplasm. In terms of biological role, putative nitroreductase that may contribute to the degradation of aromatic compounds. The sequence is that of Putative NAD(P)H nitroreductase MhqN (mhqN) from Bacillus subtilis (strain 168).